The sequence spans 344 residues: Beta-hexosaminidase (344 aa).

Residues Asp-60, Arg-68, Arg-132, and 162–163 (KH) contribute to the substrate site. The active-site Proton donor/acceptor is the His-175. Asp-247 serves as the catalytic Nucleophile.

It belongs to the glycosyl hydrolase 3 family. NagZ subfamily.

It is found in the cytoplasm. The enzyme catalyses Hydrolysis of terminal non-reducing N-acetyl-D-hexosamine residues in N-acetyl-beta-D-hexosaminides.. The protein operates within cell wall biogenesis; peptidoglycan recycling. In terms of biological role, plays a role in peptidoglycan recycling by cleaving the terminal beta-1,4-linked N-acetylglucosamine (GlcNAc) from peptide-linked peptidoglycan fragments, giving rise to free GlcNAc, anhydro-N-acetylmuramic acid and anhydro-N-acetylmuramic acid-linked peptides. This is Beta-hexosaminidase from Haemophilus ducreyi (strain 35000HP / ATCC 700724).